We begin with the raw amino-acid sequence, 79 residues long: MGGFTSIWHWVIVLLVIVLLFGAKKIPELAKGLGSGIKNFKKAVKDDEEEAKNEPKTLDAQATQTKVHETSEIKSKQES.

A helical transmembrane segment spans residues 1 to 21; the sequence is MGGFTSIWHWVIVLLVIVLLF. A disordered region spans residues 46–79; it reads DDEEEAKNEPKTLDAQATQTKVHETSEIKSKQES. Residues 66 to 79 show a composition bias toward basic and acidic residues; that stretch reads KVHETSEIKSKQES.

This sequence belongs to the TatA/E family. The Tat system comprises two distinct complexes: a TatABC complex, containing multiple copies of TatA, TatB and TatC subunits, and a separate TatA complex, containing only TatA subunits. Substrates initially bind to the TatABC complex, which probably triggers association of the separate TatA complex to form the active translocon.

It is found in the cell inner membrane. Part of the twin-arginine translocation (Tat) system that transports large folded proteins containing a characteristic twin-arginine motif in their signal peptide across membranes. TatA could form the protein-conducting channel of the Tat system. This chain is Sec-independent protein translocase protein TatA, found in Helicobacter pylori (strain HPAG1).